Consider the following 313-residue polypeptide: ADP,ATP carrier protein (313 aa).

Solcar repeat units follow at residues proline 11–methionine 104, lysine 116–valine 208, and asparagine 216–leucine 302. The next 5 membrane-spanning stretches (helical) occupy residues phenylalanine 13–leucine 40, threonine 81–phenylalanine 105, tyrosine 114–leucine 134, phenylalanine 184–isoleucine 205, and leucine 219–leucine 239. ADP-binding residues include arginine 86 and arginine 98. An ADP-binding site is contributed by arginine 243. Residues arginine 243–methionine 248 are important for transport activity. The Nucleotide carrier signature motif motif lies at arginine 243 to methionine 248. The chain crosses the membrane as a helical span at residues alanine 279–leucine 299.

It belongs to the mitochondrial carrier (TC 2.A.29) family. Monomer.

Its subcellular location is the mitochondrion inner membrane. The enzyme catalyses ADP(in) + ATP(out) = ADP(out) + ATP(in). The matrix-open state (m-state) is inhibited by the membrane-permeable bongkrekic acid (BKA). The cytoplasmic-open state (c-state) is inhibited by the membrane-impermeable toxic inhibitor carboxyatractyloside (CATR). Functionally, ADP:ATP antiporter that mediates import of ADP into the mitochondrial matrix for ATP synthesis, and export of ATP out to fuel the cell. Cycles between the cytoplasmic-open state (c-state) and the matrix-open state (m-state): operates by the alternating access mechanism with a single substrate-binding site intermittently exposed to either the cytosolic (c-state) or matrix (m-state) side of the inner mitochondrial membrane. The sequence is that of ADP,ATP carrier protein (aac) from Neurospora crassa (strain ATCC 24698 / 74-OR23-1A / CBS 708.71 / DSM 1257 / FGSC 987).